The sequence spans 388 residues: Succinate--CoA ligase [ADP-forming] subunit beta (388 aa).

The region spanning 9 to 244 is the ATP-grasp domain; it reads KQLFAEYGLP…PSQDDPREAH (236 aa). ATP is bound by residues Lys46, 53–55, Glu99, Thr102, and Glu107; that span reads GRG. Asn199 and Asp213 together coordinate Mg(2+). Residues Asn264 and 321–323 contribute to the substrate site; that span reads GIV.

It belongs to the succinate/malate CoA ligase beta subunit family. Heterotetramer of two alpha and two beta subunits. It depends on Mg(2+) as a cofactor.

The enzyme catalyses succinate + ATP + CoA = succinyl-CoA + ADP + phosphate. It carries out the reaction GTP + succinate + CoA = succinyl-CoA + GDP + phosphate. The protein operates within carbohydrate metabolism; tricarboxylic acid cycle; succinate from succinyl-CoA (ligase route): step 1/1. In terms of biological role, succinyl-CoA synthetase functions in the citric acid cycle (TCA), coupling the hydrolysis of succinyl-CoA to the synthesis of either ATP or GTP and thus represents the only step of substrate-level phosphorylation in the TCA. The beta subunit provides nucleotide specificity of the enzyme and binds the substrate succinate, while the binding sites for coenzyme A and phosphate are found in the alpha subunit. The polypeptide is Succinate--CoA ligase [ADP-forming] subunit beta (Pseudomonas fluorescens (strain SBW25)).